Consider the following 294-residue polypeptide: N-acetylmuramic acid 6-phosphate etherase (294 aa).

The region spanning 54 to 217 (VIKSFEEEGR…STASMIGVGK (164 aa)) is the SIS domain. The active-site Proton donor is Glu-82. Residue Glu-113 is part of the active site.

This sequence belongs to the GCKR-like family. MurNAc-6-P etherase subfamily. In terms of assembly, homodimer.

The enzyme catalyses N-acetyl-D-muramate 6-phosphate + H2O = N-acetyl-D-glucosamine 6-phosphate + (R)-lactate. The protein operates within amino-sugar metabolism; N-acetylmuramate degradation. Its function is as follows. Specifically catalyzes the cleavage of the D-lactyl ether substituent of MurNAc 6-phosphate, producing GlcNAc 6-phosphate and D-lactate. The sequence is that of N-acetylmuramic acid 6-phosphate etherase from Bacillus cereus (strain AH187).